The primary structure comprises 632 residues: Threonine--tRNA ligase (632 aa).

Residues 1 to 59 (MIRITFLAKQKVEEYSSRVTGFDILQPDISKEAIALRVNGELYDLSREIESDTEIDVIQ) enclose the TGS domain. The segment at 240–532 (DHRRIAKDMD…LIEHYAGKFP (293 aa)) is catalytic. Residues Cys-332, His-383, and His-509 each contribute to the Zn(2+) site.

It belongs to the class-II aminoacyl-tRNA synthetase family. Homodimer. It depends on Zn(2+) as a cofactor.

It is found in the cytoplasm. The catalysed reaction is tRNA(Thr) + L-threonine + ATP = L-threonyl-tRNA(Thr) + AMP + diphosphate + H(+). In terms of biological role, catalyzes the attachment of threonine to tRNA(Thr) in a two-step reaction: L-threonine is first activated by ATP to form Thr-AMP and then transferred to the acceptor end of tRNA(Thr). Also edits incorrectly charged L-seryl-tRNA(Thr). The protein is Threonine--tRNA ligase of Wolbachia sp. subsp. Brugia malayi (strain TRS).